Here is a 470-residue protein sequence, read N- to C-terminus: Neuraminidase (470 aa).

The Intravirion segment spans residues 1 to 6 (MNPNQK). The helical transmembrane segment at 7 to 27 (IITIGSICMAIGIISLILQMG) threads the bilayer. Residues 11–33 (GSICMAIGIISLILQMGNIISIW) are involved in apical transport and lipid raft association. Over 28–470 (NIISIWVSHS…GAELPFTIDK (443 aa)) the chain is Virion surface. The hypervariable stalk region stretch occupies residues 36–90 (HSIQTGSQNHTGICNQRIITYENSTWVNQTYVNINNTNVVAGKDTTSVTLAGNSS). N-linked (GlcNAc...) asparagine; by host glycosylation is found at N44, N58, N63, N70, and N88. The segment at 91–470 (LCPIRGWAIY…GAELPFTIDK (380 aa)) is head of neuraminidase. Cystine bridges form between C92–C417, C124–C129, C184–C231, C233–C238, C279–C292, C281–C290, C318–C335, and C421–C447. R118 serves as a coordination point for substrate. N146 carries N-linked (GlcNAc...) asparagine; by host glycosylation. D151 functions as the Proton donor/acceptor in the catalytic mechanism. R152 serves as a coordination point for substrate. N235 is a glycosylation site (N-linked (GlcNAc...) asparagine; by host). Residue 277 to 278 (EE) participates in substrate binding. A substrate-binding site is contributed by R293. Ca(2+) is bound by residues D294, G298, and D324. N365 carries an N-linked (GlcNAc...) asparagine; by host glycan. R368 serves as a coordination point for substrate. The active-site Nucleophile is Y402. Residue N455 is glycosylated (N-linked (GlcNAc...) asparagine; by host).

The protein belongs to the glycosyl hydrolase 34 family. Homotetramer. Ca(2+) is required as a cofactor. In terms of processing, N-glycosylated.

It is found in the virion membrane. The protein resides in the host apical cell membrane. The enzyme catalyses Hydrolysis of alpha-(2-&gt;3)-, alpha-(2-&gt;6)-, alpha-(2-&gt;8)- glycosidic linkages of terminal sialic acid residues in oligosaccharides, glycoproteins, glycolipids, colominic acid and synthetic substrates.. Inhibited by the neuraminidase inhibitors zanamivir (Relenza) and oseltamivir (Tamiflu). These drugs interfere with the release of progeny virus from infected cells and are effective against all influenza strains. Resistance to neuraminidase inhibitors is quite rare. Catalyzes the removal of terminal sialic acid residues from viral and cellular glycoconjugates. Cleaves off the terminal sialic acids on the glycosylated HA during virus budding to facilitate virus release. Additionally helps virus spread through the circulation by further removing sialic acids from the cell surface. These cleavages prevent self-aggregation and ensure the efficient spread of the progeny virus from cell to cell. Otherwise, infection would be limited to one round of replication. Described as a receptor-destroying enzyme because it cleaves a terminal sialic acid from the cellular receptors. May facilitate viral invasion of the upper airways by cleaving the sialic acid moieties on the mucin of the airway epithelial cells. Likely to plays a role in the budding process through its association with lipid rafts during intracellular transport. May additionally display a raft-association independent effect on budding. Plays a role in the determination of host range restriction on replication and virulence. Sialidase activity in late endosome/lysosome traffic seems to enhance virus replication. The protein is Neuraminidase of Aves (Human).